Reading from the N-terminus, the 515-residue chain is Probable coatomer subunit delta (515 aa).

Residues 161–180 show a composition bias toward basic and acidic residues; it reads AKQAMAEKAKELKRAQKEAL. The disordered stretch occupies residues 161-231; sequence AKQAMAEKAK…GGKALKLGGK (71 aa). Low complexity predominate over residues 187-198; that stretch reads SYQSSTGISSSS. The MHD domain maps to 276–515; it reads REVVHVRTEE…TFNSENFEIV (240 aa).

It belongs to the adaptor complexes medium subunit family. Delta-COP subfamily. As to quaternary structure, oligomeric complex that consists of at least the alpha, beta, beta', gamma, delta, epsilon and zeta subunits.

Its subcellular location is the cytoplasm. The protein resides in the golgi apparatus membrane. It is found in the cytoplasmic vesicle. It localises to the COPI-coated vesicle membrane. Its function is as follows. The coatomer is a cytosolic protein complex that binds to dilysine motifs and reversibly associates with Golgi non-clathrin-coated vesicles, which further mediate biosynthetic protein transport from the ER, via the Golgi up to the trans Golgi network. Coatomer complex is required for budding from Golgi membranes, and is essential for the retrograde Golgi-to-ER transport of dilysine-tagged proteins. This chain is Probable coatomer subunit delta, found in Caenorhabditis elegans.